We begin with the raw amino-acid sequence, 569 residues long: Proline--tRNA ligase (569 aa).

Belongs to the class-II aminoacyl-tRNA synthetase family. ProS type 1 subfamily. Homodimer.

It localises to the cytoplasm. The catalysed reaction is tRNA(Pro) + L-proline + ATP = L-prolyl-tRNA(Pro) + AMP + diphosphate. Its function is as follows. Catalyzes the attachment of proline to tRNA(Pro) in a two-step reaction: proline is first activated by ATP to form Pro-AMP and then transferred to the acceptor end of tRNA(Pro). As ProRS can inadvertently accommodate and process non-cognate amino acids such as alanine and cysteine, to avoid such errors it has two additional distinct editing activities against alanine. One activity is designated as 'pretransfer' editing and involves the tRNA(Pro)-independent hydrolysis of activated Ala-AMP. The other activity is designated 'posttransfer' editing and involves deacylation of mischarged Ala-tRNA(Pro). The misacylated Cys-tRNA(Pro) is not edited by ProRS. The protein is Proline--tRNA ligase of Legionella pneumophila (strain Lens).